The sequence spans 229 residues: Small ribosomal subunit protein mS23 (229 aa).

It belongs to the mitochondrion-specific ribosomal protein mS23 family. In terms of assembly, component of the mitochondrial small ribosomal subunit.

The protein resides in the mitochondrion. The protein is Small ribosomal subunit protein mS23 (RSM25) of Yarrowia lipolytica (strain CLIB 122 / E 150) (Yeast).